A 306-amino-acid chain; its full sequence is tRNA pseudouridine synthase B (306 aa).

D43 acts as the Nucleophile in catalysis.

Belongs to the pseudouridine synthase TruB family. Type 1 subfamily.

The enzyme catalyses uridine(55) in tRNA = pseudouridine(55) in tRNA. In terms of biological role, responsible for synthesis of pseudouridine from uracil-55 in the psi GC loop of transfer RNAs. This is tRNA pseudouridine synthase B from Syntrophobacter fumaroxidans (strain DSM 10017 / MPOB).